The primary structure comprises 394 residues: NAD(P)H-quinone oxidoreductase subunit H (394 aa).

It belongs to the complex I 49 kDa subunit family. In terms of assembly, NDH-1 can be composed of about 15 different subunits; different subcomplexes with different compositions have been identified which probably have different functions.

The protein localises to the cellular thylakoid membrane. The enzyme catalyses a plastoquinone + NADH + (n+1) H(+)(in) = a plastoquinol + NAD(+) + n H(+)(out). The catalysed reaction is a plastoquinone + NADPH + (n+1) H(+)(in) = a plastoquinol + NADP(+) + n H(+)(out). NDH-1 shuttles electrons from an unknown electron donor, via FMN and iron-sulfur (Fe-S) centers, to quinones in the respiratory and/or the photosynthetic chain. The immediate electron acceptor for the enzyme in this species is believed to be plastoquinone. Couples the redox reaction to proton translocation, and thus conserves the redox energy in a proton gradient. Cyanobacterial NDH-1 also plays a role in inorganic carbon-concentration. The chain is NAD(P)H-quinone oxidoreductase subunit H from Trichormus variabilis (strain ATCC 29413 / PCC 7937) (Anabaena variabilis).